A 315-amino-acid polypeptide reads, in one-letter code: Voltage-dependent calcium channel gamma-3 subunit (315 aa).

The next 4 membrane-spanning stretches (helical) occupy residues 8–28, 104–124, 135–155, and 181–201; these read IQML…TIAV, SSVF…CVAA, ILSA…GIIV, and FGAF…HIYI. The disordered stretch occupies residues 232-253; that stretch reads RRRSSSRSTEPRSRDLSPISKG. Residue Ser248 is modified to Phosphoserine.

The protein belongs to the PMP-22/EMP/MP20 family. CACNG subfamily. In terms of assembly, the L-type calcium channel is composed of five subunits: alpha-1, alpha-2/delta, beta and gamma. Acts as an auxiliary subunit for AMPA-selective glutamate receptors (AMPARs). Found in a complex with GRIA1, GRIA2, GRIA3, GRIA4, CNIH2, CNIH3, CACNG2, CACNG4, CACNG5, CACNG7 and CACNG8. Interacts with AP4M1 and GRIA1; associates GRIA1 with the adaptor protein complex 4 (AP-4) to target GRIA1 to the somatodendritic compartment of neurons.

It is found in the membrane. Its function is as follows. Regulates the trafficking to the somatodendritic compartment and gating properties of AMPA-selective glutamate receptors (AMPARs). Promotes their targeting to the cell membrane and synapses and modulates their gating properties by slowing their rates of activation, deactivation and desensitization. Does not show subunit-specific AMPA receptor regulation and regulates all AMPAR subunits. Thought to stabilize the calcium channel in an inactivated (closed) state. This is Voltage-dependent calcium channel gamma-3 subunit (Cacng3) from Mus musculus (Mouse).